Consider the following 205-residue polypeptide: Pyridoxal 5'-phosphate synthase subunit PdxT (205 aa).

Glycine 52–serine 54 contacts L-glutamine. The Nucleophile role is filled by cysteine 84. L-glutamine is bound by residues arginine 116 and isoleucine 145–arginine 146. Residues histidine 185 and glutamate 187 each act as charge relay system in the active site.

It belongs to the glutaminase PdxT/SNO family. In terms of assembly, in the presence of PdxS, forms a dodecamer of heterodimers. Only shows activity in the heterodimer.

It catalyses the reaction aldehydo-D-ribose 5-phosphate + D-glyceraldehyde 3-phosphate + L-glutamine = pyridoxal 5'-phosphate + L-glutamate + phosphate + 3 H2O + H(+). The enzyme catalyses L-glutamine + H2O = L-glutamate + NH4(+). It functions in the pathway cofactor biosynthesis; pyridoxal 5'-phosphate biosynthesis. Catalyzes the hydrolysis of glutamine to glutamate and ammonia as part of the biosynthesis of pyridoxal 5'-phosphate. The resulting ammonia molecule is channeled to the active site of PdxS. The protein is Pyridoxal 5'-phosphate synthase subunit PdxT of Staphylothermus marinus (strain ATCC 43588 / DSM 3639 / JCM 9404 / F1).